Here is a 568-residue protein sequence, read N- to C-terminus: Urease subunit alpha (568 aa).

The Urease domain occupies G130 to F568. Residues H135, H137, and K218 each coordinate Ni(2+). Position 218 is an N6-carboxylysine (K218). Residue H220 coordinates substrate. Residues H247 and H273 each contribute to the Ni(2+) site. The active-site Proton donor is H321. Ni(2+) is bound at residue D361.

Belongs to the metallo-dependent hydrolases superfamily. Urease alpha subunit family. As to quaternary structure, heterotrimer of UreA (gamma), UreB (beta) and UreC (alpha) subunits. Three heterotrimers associate to form the active enzyme. Ni cation serves as cofactor. Post-translationally, carboxylation allows a single lysine to coordinate two nickel ions.

It is found in the cytoplasm. The enzyme catalyses urea + 2 H2O + H(+) = hydrogencarbonate + 2 NH4(+). The protein operates within nitrogen metabolism; urea degradation; CO(2) and NH(3) from urea (urease route): step 1/1. The polypeptide is Urease subunit alpha (Burkholderia pseudomallei (strain 668)).